Consider the following 309-residue polypeptide: Homoserine kinase (309 aa).

91–101 (PIGSGLGSSAC) is a binding site for ATP.

Belongs to the GHMP kinase family. Homoserine kinase subfamily.

The protein resides in the cytoplasm. It catalyses the reaction L-homoserine + ATP = O-phospho-L-homoserine + ADP + H(+). The protein operates within amino-acid biosynthesis; L-threonine biosynthesis; L-threonine from L-aspartate: step 4/5. Its function is as follows. Catalyzes the ATP-dependent phosphorylation of L-homoserine to L-homoserine phosphate. This is Homoserine kinase from Citrobacter koseri (strain ATCC BAA-895 / CDC 4225-83 / SGSC4696).